A 102-amino-acid polypeptide reads, in one-letter code: Small ribosomal subunit protein eS24 (102 aa).

The protein belongs to the eukaryotic ribosomal protein eS24 family.

The polypeptide is Small ribosomal subunit protein eS24 (Halorubrum lacusprofundi (strain ATCC 49239 / DSM 5036 / JCM 8891 / ACAM 34)).